A 485-amino-acid polypeptide reads, in one-letter code: Telomeric DNA-binding factor trf1 (485 aa).

Residues 1–20 (MSKRSLDPSDDFKGQKRLAI) show a composition bias toward basic and acidic residues. Positions 1-23 (MSKRSLDPSDDFKGQKRLAIDPE) are disordered. Residues 400–457 (RRVANRRSWTKEEEEALLDGLDLVKGPRWSQILELYGPGGKKSEVLKYRNQVQLKDKA) form the HTH myb-type domain. Positions 428-453 (WSQILELYGPGGKKSEVLKYRNQVQL) form a DNA-binding region, H-T-H motif.

Homodimer.

It localises to the nucleus. Functionally, binds the telomeric double-stranded TTACAGG repeat and regulates telomere length. The sequence is that of Telomeric DNA-binding factor trf1 (trf1) from Schizosaccharomyces pombe (strain 972 / ATCC 24843) (Fission yeast).